Here is a 134-residue protein sequence, read N- to C-terminus: Phosphomevalonate dehydratase small subunit (134 aa).

Serine 62 acts as the Proton acceptor in catalysis.

The protein belongs to the AcnX type II small subunit family. As to quaternary structure, heterodimer composed of a large subunit (PMDh-L) and a small subunit (PMDh-S).

The enzyme catalyses (R)-5-phosphomevalonate = (2E)-3-methyl-5-phosphooxypent-2-enoate + H2O. The protein operates within isoprenoid biosynthesis; isopentenyl diphosphate biosynthesis via mevalonate pathway. Component of a hydro-lyase that catalyzes the dehydration of mevalonate 5-phosphate (MVA5P) to form trans-anhydromevalonate 5-phosphate (tAHMP). Involved in the archaeal mevalonate (MVA) pathway, which provides fundamental precursors for isoprenoid biosynthesis, such as isopentenyl diphosphate (IPP) and dimethylallyl diphosphate (DMAPP). The chain is Phosphomevalonate dehydratase small subunit from Pyrococcus furiosus (strain ATCC 43587 / DSM 3638 / JCM 8422 / Vc1).